Reading from the N-terminus, the 365-residue chain is Spermidine/putrescine import ATP-binding protein PotA (365 aa).

Residues 7–237 (LTLADITKRF…PNNLFVASFI (231 aa)) enclose the ABC transporter domain. Residue 39 to 46 (GPSGCGKT) coordinates ATP.

It belongs to the ABC transporter superfamily. Spermidine/putrescine importer (TC 3.A.1.11.1) family. In terms of assembly, the complex is composed of two ATP-binding proteins (PotA), two transmembrane proteins (PotB and PotC) and a solute-binding protein (PotD).

It localises to the cell inner membrane. It catalyses the reaction ATP + H2O + polyamine-[polyamine-binding protein]Side 1 = ADP + phosphate + polyamineSide 2 + [polyamine-binding protein]Side 1.. Functionally, part of the ABC transporter complex PotABCD involved in spermidine/putrescine import. Responsible for energy coupling to the transport system. This chain is Spermidine/putrescine import ATP-binding protein PotA, found in Hahella chejuensis (strain KCTC 2396).